The primary structure comprises 535 residues: Probable serine/threonine protein phosphatase 2A regulatory subunit B''delta (535 aa).

The tract at residues 67 to 104 (SGTNSGSNSPLASMFPARNGPPLSPRNSTGSPRIARQR) is disordered. EF-hand domains lie at 174-209 (VPSFFSTSIFKKVDTNNTGFVKREDFIDYWVKGNML) and 387-422 (SSEPSLEYWFKCIDLDANGVLTRNELQFFYEEQLHR). Ca(2+)-binding residues include aspartate 400, aspartate 402, asparagine 404, and glutamate 411.

In terms of assembly, PP2A consists of a common heterodimeric core enzyme, composed of a 36 kDa catalytic subunit (subunit C) and a 65 kDa constant regulatory subunit (PR65 or subunit A), that associates with a variety of regulatory subunits. Proteins that associate with the core dimer include three families of regulatory subunits B (the R2/B/PR55/B55, R3/B''/PR72/PR130/PR59 and R5/B'/B56 families) and cell signaling molecules.

In terms of biological role, probable regulatory subunit of type 2A protein phosphatase. This Arabidopsis thaliana (Mouse-ear cress) protein is Probable serine/threonine protein phosphatase 2A regulatory subunit B''delta (B''DELTA).